The chain runs to 693 residues: Elongation factor G (693 aa).

The tr-type G domain maps to 8-282 (AKTRNIGIMA…AVIDYLPSPL (275 aa)). Residues 17-24 (AHVDAGKT), 81-85 (DTPGH), and 135-138 (NKMD) each bind GTP.

Belongs to the TRAFAC class translation factor GTPase superfamily. Classic translation factor GTPase family. EF-G/EF-2 subfamily.

It is found in the cytoplasm. Functionally, catalyzes the GTP-dependent ribosomal translocation step during translation elongation. During this step, the ribosome changes from the pre-translocational (PRE) to the post-translocational (POST) state as the newly formed A-site-bound peptidyl-tRNA and P-site-bound deacylated tRNA move to the P and E sites, respectively. Catalyzes the coordinated movement of the two tRNA molecules, the mRNA and conformational changes in the ribosome. The polypeptide is Elongation factor G (Streptococcus thermophilus (strain CNRZ 1066)).